The sequence spans 549 residues: Probable protein kinase UbiB (549 aa).

The Protein kinase domain maps to 123–501 (DFNDTPLASA…QQKSHKSNYL (379 aa)). ATP-binding positions include 129–137 (LASASISQV) and lysine 152. The active-site Proton acceptor is the aspartate 287. The next 2 helical transmembrane spans lie at 498–518 (SNYL…LFTQ) and 519–539 (IVTL…WAIG).

This sequence belongs to the ABC1 family. UbiB subfamily.

Its subcellular location is the cell inner membrane. Its pathway is cofactor biosynthesis; ubiquinone biosynthesis [regulation]. Functionally, is probably a protein kinase regulator of UbiI activity which is involved in aerobic coenzyme Q (ubiquinone) biosynthesis. In Shewanella frigidimarina (strain NCIMB 400), this protein is Probable protein kinase UbiB.